Reading from the N-terminus, the 548-residue chain is Membrane protein insertase YidC (548 aa).

Residues 6–26 (NLLVIALLFVSFMIWQAWEQD) form a helical membrane-spanning segment. Residues 28–56 (NPQPQTQQTTQTTTTAAGSAADQGVPASG) form a disordered region. Residues 29-42 (PQPQTQQTTQTTTT) show a composition bias toward low complexity. 4 helical membrane-spanning segments follow: residues 350–370 (FVGN…GIMY), 424–444 (FPLI…MGSI), 458–478 (LSAQ…MFFI), and 499–519 (PVIF…YYIV).

It belongs to the OXA1/ALB3/YidC family. Type 1 subfamily. Interacts with the Sec translocase complex via SecD. Specifically interacts with transmembrane segments of nascent integral membrane proteins during membrane integration.

It is found in the cell inner membrane. Functionally, required for the insertion and/or proper folding and/or complex formation of integral membrane proteins into the membrane. Involved in integration of membrane proteins that insert both dependently and independently of the Sec translocase complex, as well as at least some lipoproteins. Aids folding of multispanning membrane proteins. The chain is Membrane protein insertase YidC from Salmonella dublin (strain CT_02021853).